Here is a 396-residue protein sequence, read N- to C-terminus: Putative carbamoyltransferase YgeW (396 aa).

Carbamoyl phosphate contacts are provided by residues 71–74, Gln98, 165–168, and 330–331; these read STRT, HPTQ, and CL.

The protein belongs to the aspartate/ornithine carbamoyltransferase superfamily. Homotrimer.

In Escherichia coli O6:H1 (strain CFT073 / ATCC 700928 / UPEC), this protein is Putative carbamoyltransferase YgeW (ygeW).